The following is a 230-amino-acid chain: Heptaprenylglyceryl phosphate synthase (230 aa).

K12 serves as a coordination point for sn-glycerol 1-phosphate. Mg(2+) contacts are provided by D14 and T40. Sn-glycerol 1-phosphate-binding positions include 159–164 (YIEYSG), G189, and 209–210 (GD).

This sequence belongs to the GGGP/HepGP synthase family. Group I subfamily. As to quaternary structure, homodimer. Mg(2+) serves as cofactor.

It catalyses the reaction sn-glycerol 1-phosphate + all-trans-heptaprenyl diphosphate = 3-heptaprenyl-sn-glycero-1-phosphate + diphosphate. Its pathway is membrane lipid metabolism; glycerophospholipid metabolism. Functionally, prenyltransferase that catalyzes in vivo the transfer of the heptaprenyl moiety of heptaprenyl pyrophosphate (HepPP; 35 carbon atoms) to the C3 hydroxyl of sn-glycerol-1-phosphate (G1P), producing heptaprenylglyceryl phosphate (HepGP). This reaction is an ether-bond-formation step in the biosynthesis of archaea-type G1P-based membrane lipids found in Bacillales. This Staphylococcus aureus (strain bovine RF122 / ET3-1) protein is Heptaprenylglyceryl phosphate synthase.